We begin with the raw amino-acid sequence, 316 residues long: Beta-ketoacyl-[acyl-carrier-protein] synthase III 1 (316 aa).

Catalysis depends on residues C112 and H243. The ACP-binding stretch occupies residues 244-248; that stretch reads QANYR. N273 is an active-site residue.

Belongs to the thiolase-like superfamily. FabH family. As to quaternary structure, homodimer.

It is found in the cytoplasm. The catalysed reaction is malonyl-[ACP] + acetyl-CoA + H(+) = 3-oxobutanoyl-[ACP] + CO2 + CoA. The protein operates within lipid metabolism; fatty acid biosynthesis. In terms of biological role, catalyzes the condensation reaction of fatty acid synthesis by the addition to an acyl acceptor of two carbons from malonyl-ACP. Catalyzes the first condensation reaction which initiates fatty acid synthesis and may therefore play a role in governing the total rate of fatty acid production. Possesses both acetoacetyl-ACP synthase and acetyl transacylase activities. Its substrate specificity determines the biosynthesis of branched-chain and/or straight-chain of fatty acids. This is Beta-ketoacyl-[acyl-carrier-protein] synthase III 1 from Vibrio vulnificus (strain YJ016).